The sequence spans 225 residues: Pyrimidine 5'-nucleotidase YjjG (225 aa).

Residue Asp9 is the Nucleophile of the active site.

This sequence belongs to the HAD-like hydrolase superfamily. YjjG family. As to quaternary structure, monomer, homodimer and possibly homotetramer in solution. Mn(2+) is required as a cofactor. Mg(2+) serves as cofactor. Requires Co(2+) as cofactor.

The protein localises to the cytoplasm. The enzyme catalyses a ribonucleoside 5'-phosphate + H2O = a ribonucleoside + phosphate. It catalyses the reaction a 2'-deoxyribonucleoside 5'-phosphate + H2O = a 2'-deoxyribonucleoside + phosphate. The catalysed reaction is UMP + H2O = uridine + phosphate. It carries out the reaction dUMP + H2O = 2'-deoxyuridine + phosphate. The enzyme catalyses dTMP + H2O = thymidine + phosphate. Its activity is regulated as follows. In contrast to nucleotidases from other families, is not inhibited by ribo- and deoxyribonucleoside di- and triphosphates. Functionally, nucleotidase that shows high phosphatase activity toward non-canonical pyrimidine nucleotides and three canonical nucleoside 5'-monophosphates (UMP, dUMP, and dTMP), and very low activity against TDP, IMP, UDP, GMP, dGMP, AMP, dAMP, and 6-phosphogluconate. Appears to function as a house-cleaning nucleotidase in vivo, since the general nucleotidase activity of YjjG allows it to protect cells against non-canonical pyrimidine derivatives such as 5-fluoro-2'-deoxyuridine, 5-fluorouridine, 5-fluoroorotate, 5-fluorouracil, and 5-aza-2'-deoxycytidine, and prevents the incorporation of potentially mutagenic nucleotides into DNA. Its dUMP phosphatase activity that catalyzes the hydrolysis of dUMP to deoxyuridine is necessary for thymine utilization via the thymine salvage pathway. Is strictly specific to substrates with 5'-phosphates and shows no activity against nucleoside 2'- or 3'-monophosphates. This chain is Pyrimidine 5'-nucleotidase YjjG (yjjG), found in Escherichia coli (strain K12).